The chain runs to 33 residues: Pardaxin P-1 (33 aa).

Belongs to the pardaxin family. As to quaternary structure, in aqueous solution exists as a tetramer.

Its subcellular location is the secreted. The protein localises to the target cell membrane. In terms of biological role, exhibits unusual shark repellent and surfactant properties. Forms voltage-dependent, ion-permeable channels in membranes. At high concentration causes cell membrane lysis. Causes death in killfish oryzias latipes in 30 minutes at a concentration of 25 micrograms/ml. In Pardachirus pavoninus (Peacock sole), this protein is Pardaxin P-1.